The following is a 141-amino-acid chain: Putative pre-16S rRNA nuclease (141 aa).

Belongs to the YqgF nuclease family.

Its subcellular location is the cytoplasm. In terms of biological role, could be a nuclease involved in processing of the 5'-end of pre-16S rRNA. The sequence is that of Putative pre-16S rRNA nuclease from Aliivibrio fischeri (strain MJ11) (Vibrio fischeri).